The chain runs to 132 residues: MSMNDPLSDMIARIKNAATRKRAKVATPASKLRARVLDVLADEGYIRGYSLVEKPGAFPEFEIELKYFDGEPVIAEIARVSKPGRRVYSSIKDLKPIKNGLGISILSTPKGVMSDSAARDANVGGEVLCRVY.

Belongs to the universal ribosomal protein uS8 family. Part of the 30S ribosomal subunit. Contacts proteins S5 and S12.

Functionally, one of the primary rRNA binding proteins, it binds directly to 16S rRNA central domain where it helps coordinate assembly of the platform of the 30S subunit. This Caulobacter sp. (strain K31) protein is Small ribosomal subunit protein uS8.